We begin with the raw amino-acid sequence, 427 residues long: GTPase ERA-like, chloroplastic (427 aa).

The transit peptide at 1–39 (MAVSPHISPTLSRYKFFSTSVVENPNFSPYRIYSRRRVT) directs the protein to the chloroplast. An Era-type G domain is found at 128–298 (RSGYVAVVGM…KEWILSKLPF (171 aa)). Residues 136–143 (GMPNVGKS) are G1. Position 136–143 (136–143 (GMPNVGKS)) interacts with GTP. A G2 region spans residues 162-166 (QTTRH). Residues 183-186 (DTPG) form a G3 region. GTP contacts are provided by residues 183-187 (DTPGV) and 248-251 (NKKD). The segment at 248 to 251 (NKKD) is G4. The G5 stretch occupies residues 277-279 (VSA). Residues 329–406 (YRNEVPYACQ…FLEVEVKVKE (78 aa)) enclose the KH type-2 domain.

Belongs to the TRAFAC class TrmE-Era-EngA-EngB-Septin-like GTPase superfamily. Era GTPase family.

It localises to the plastid. Its subcellular location is the chloroplast stroma. The protein resides in the chloroplast nucleoid. In terms of biological role, nuclear genome-encoded probable GTPase involved in ribosome biogenesis in chloroplasts. Plays a role in 16S rRNA maturation in plastids and may contribute to the assembly of the small (30S) ribosomal subunit. In Arabidopsis thaliana (Mouse-ear cress), this protein is GTPase ERA-like, chloroplastic.